A 113-amino-acid polypeptide reads, in one-letter code: Putative glycerol transporter Lin0367 (113 aa).

4 helical membrane-spanning segments follow: residues 3–23 (IGIA…IRMM), 30–50 (EWGA…VWTI), 63–83 (GTVW…ASLL), and 92–112 (VVNL…LSLF).

Its subcellular location is the membrane. In terms of biological role, could be involved in the glycerol uptake either via facilitated diffusion or active transport. This is Putative glycerol transporter Lin0367 from Listeria innocua serovar 6a (strain ATCC BAA-680 / CLIP 11262).